The chain runs to 349 residues: GMP reductase (349 aa).

Residue 108–131 (LDFFKIKKIFSLSSELKYICIDVA) coordinates NADP(+). K(+)-binding residues include glycine 181 and glycine 183. Cysteine 186 serves as the catalytic Thioimidate intermediate. 216 to 239 (IISDGGCTVSGDIAKAFGGGADFV) provides a ligand contact to NADP(+).

This sequence belongs to the IMPDH/GMPR family. GuaC type 1 subfamily. In terms of assembly, homotetramer.

It carries out the reaction IMP + NH4(+) + NADP(+) = GMP + NADPH + 2 H(+). In terms of biological role, catalyzes the irreversible NADPH-dependent deamination of GMP to IMP. It functions in the conversion of nucleobase, nucleoside and nucleotide derivatives of G to A nucleotides, and in maintaining the intracellular balance of A and G nucleotides. This Buchnera aphidicola subsp. Schizaphis graminum (strain Sg) protein is GMP reductase.